The chain runs to 203 residues: MAHGPRYRVPFRRRREGKTNYRKRLKLLKSGKPRLVVRKSLNHHIAQIIVYDPKGDRTLVSAHTRELIRDFGWKGHCGNTPSAYLLGLLIGYKAKQAGIEEAILDIGLHPPVRGSSVFAVLKGAVDAGLNVPHSPEIFPDEYRIRGEHIAEYAKMLKEQDEEKFRRQFGGYLVKGLDPEKLPEHFEEVKARIIEKFEGEGARE.

It belongs to the universal ribosomal protein uL18 family. As to quaternary structure, part of the 50S ribosomal subunit. Contacts the 5S and 23S rRNAs.

Its function is as follows. This is one of the proteins that bind and probably mediate the attachment of the 5S RNA into the large ribosomal subunit, where it forms part of the central protuberance. The polypeptide is Large ribosomal subunit protein uL18 (Pyrococcus furiosus (strain ATCC 43587 / DSM 3638 / JCM 8422 / Vc1)).